A 262-amino-acid chain; its full sequence is 5'-nucleotidase SurE (262 aa).

Aspartate 8, aspartate 9, serine 40, and asparagine 92 together coordinate a divalent metal cation.

This sequence belongs to the SurE nucleotidase family. A divalent metal cation is required as a cofactor.

The protein resides in the cytoplasm. The catalysed reaction is a ribonucleoside 5'-phosphate + H2O = a ribonucleoside + phosphate. In terms of biological role, nucleotidase that shows phosphatase activity on nucleoside 5'-monophosphates. The protein is 5'-nucleotidase SurE of Xylella fastidiosa (strain 9a5c).